Here is a 282-residue protein sequence, read N- to C-terminus: Bifunctional protein FolD 2 (282 aa).

Residues 165–167 (GRS) and serine 190 contribute to the NADP(+) site.

This sequence belongs to the tetrahydrofolate dehydrogenase/cyclohydrolase family. As to quaternary structure, homodimer.

The enzyme catalyses (6R)-5,10-methylene-5,6,7,8-tetrahydrofolate + NADP(+) = (6R)-5,10-methenyltetrahydrofolate + NADPH. It catalyses the reaction (6R)-5,10-methenyltetrahydrofolate + H2O = (6R)-10-formyltetrahydrofolate + H(+). Its pathway is one-carbon metabolism; tetrahydrofolate interconversion. In terms of biological role, catalyzes the oxidation of 5,10-methylenetetrahydrofolate to 5,10-methenyltetrahydrofolate and then the hydrolysis of 5,10-methenyltetrahydrofolate to 10-formyltetrahydrofolate. This chain is Bifunctional protein FolD 2, found in Acinetobacter baylyi (strain ATCC 33305 / BD413 / ADP1).